Here is a 322-residue protein sequence, read N- to C-terminus: Fructose-1,6-bisphosphatase class 1 3 (322 aa).

Residues Glu-84, Asp-103, Leu-105, and Asp-106 each coordinate Mg(2+). Residues 106-109 (DGSS), Asn-198, and Lys-262 contribute to the substrate site. Glu-268 contacts Mg(2+).

This sequence belongs to the FBPase class 1 family. In terms of assembly, homotetramer. Mg(2+) serves as cofactor.

It localises to the cytoplasm. The enzyme catalyses beta-D-fructose 1,6-bisphosphate + H2O = beta-D-fructose 6-phosphate + phosphate. Its pathway is carbohydrate biosynthesis; gluconeogenesis. The polypeptide is Fructose-1,6-bisphosphatase class 1 3 (Pseudoalteromonas translucida (strain TAC 125)).